The sequence spans 127 residues: Modulator protein MzrA (127 aa).

At 1–11 (MRKPRVTLRHL) the chain is on the cytoplasmic side. Residues 12 to 31 (AWSTMLLMVLGTGMLFWSAV) form a helical membrane-spanning segment. Residues 32–127 (RQQESTLAIR…RLRDAPHRMG (96 aa)) lie on the Periplasmic side of the membrane.

It belongs to the MzrA family. As to quaternary structure, interacts with EnvZ.

The protein localises to the cell inner membrane. Functionally, modulates the activity of the EnvZ/OmpR two-component regulatory system, probably by directly modulating EnvZ enzymatic activity and increasing stability of phosphorylated OmpR. This is Modulator protein MzrA from Citrobacter rodentium (strain ICC168) (Citrobacter freundii biotype 4280).